Here is a 511-residue protein sequence, read N- to C-terminus: FAD-dependent monooxygenase AOL_s00215g279 (511 aa).

The first 17 residues, 1–17 (MRFTLYGLLGFASLLHA), serve as a signal peptide directing secretion. The region spanning 85-256 (CWVNPACIVS…TEFDLRTRYS (172 aa)) is the FAD-binding PCMH-type domain. H122 is modified (pros-8alpha-FAD histidine).

It belongs to the oxygen-dependent FAD-linked oxidoreductase family.

Its pathway is secondary metabolite biosynthesis; terpenoid biosynthesis. Functionally, FAD-dependent monooxygenase; part of the gene cluster that mediates the biosynthesis of sesquiterpenyl epoxy-cyclohexenoids (SECs) such as anthrobotrisins and arthrosporols, metabolites that possess a novel hybrid carbon skeleton consisting of a polyketide-derived epoxycyclohexenol combined with a terpenoid-derived monocyclic sesquiterpenol substructure (PKS-PTS hybrid). The SEC pathway plays an important role for fungal soil colonization via decreasing fungal nematode-capturing ability. Within the pathway, the FAD-dependent monooxygenase AOL_s00215g279 plays a role in the oxygenation of the phenol moiety, most likely in the epoxy formation. The pathway begins with the biosynthesis of 6-methylsalicylic acid (6-MSA), the first precursor of the polyketide-derived epoxycyclohexenol in arthrosporols, by the polyketide synthase (PKS) AOL_s00215g283 via condensation of 1 acetate and 3 malonate units. The 6-methylsalicylic acid decarboxylase AOL_s00215g281 then catalyzes the decarboxylation of 6-methylsalicylic acid to yield m-cresol. The cytochrome P450 monooxygenase AOL_s00215g282 further oxidizes m-cresol to yield toluquinol. With the assistance of the oxidoreductase AOL_s00215g277, the polyprenyl transferase AOL_s00215g276 catalyzes the farnesylation of toluquinol to produce farnesyl hydroquinone, the hybrid precursor for biosynthesis of SECs. Farnesyl hydroquinone undergoes epoxidation and then subsequent dehydrogenation to form farnesyl epoxy-quinone, the first and simplest SEC. The cytochrome P450 monooxygenase AOL_s00215g278 and the FAD-dependent monooxygenase AOL_s00215g279 might be involved in the oxygenation of the phenol moiety, most likely in the epoxy formation. The cytochrome P450 monooxygenases AOL_s00215g274 and AOL_s00215g280 are involved in specific regional ketone reductions at respectively C-4 and C-1 of farnesyl epoxy-quinone PubMed:33823587. This is FAD-dependent monooxygenase AOL_s00215g279 from Arthrobotrys oligospora (strain ATCC 24927 / CBS 115.81 / DSM 1491) (Nematode-trapping fungus).